A 197-amino-acid polypeptide reads, in one-letter code: Large ribosomal subunit protein bL25 (197 aa).

This sequence belongs to the bacterial ribosomal protein bL25 family. CTC subfamily. In terms of assembly, part of the 50S ribosomal subunit; part of the 5S rRNA/L5/L18/L25 subcomplex. Contacts the 5S rRNA. Binds to the 5S rRNA independently of L5 and L18.

Functionally, this is one of the proteins that binds to the 5S RNA in the ribosome where it forms part of the central protuberance. The polypeptide is Large ribosomal subunit protein bL25 (Streptomyces avermitilis (strain ATCC 31267 / DSM 46492 / JCM 5070 / NBRC 14893 / NCIMB 12804 / NRRL 8165 / MA-4680)).